The primary structure comprises 113 residues: uncharacterized protein (113 aa).

It to M.jannaschii MJ0886 C-terminal region.

This is an uncharacterized protein from Clostridium pasteurianum.